We begin with the raw amino-acid sequence, 937 residues long: Translation initiation factor IF-2 (937 aa).

A disordered region spans residues 47-352; the sequence is RAAFQTKATP…EMPQRKERPL (306 aa). Residues 52 to 68 show a composition bias toward low complexity; the sequence is TKATPAASKPATPAAPK. Residues 97–116 are compositionally biased toward polar residues; sequence QHSNNRPQANANRNGQASNG. A compositionally biased stretch (low complexity) spans 117 to 153; sequence QNRTNNARPNNNSARPNNSRPNTNSRPNNNSQNRSTS. Residues 154-169 are compositionally biased toward polar residues; sequence ANHPMSLQEQISQANA. The segment covering 173–197 has biased composition (basic and acidic residues); the sequence is RTQERIQQQREQREADEKKRREQAN. Positions 202–229 are enriched in polar residues; it reads TRNNASNNRPSNGKPTNGARPTTNSPRP. The segment covering 240–269 has biased composition (low complexity); that stretch reads SSRPNNNNSARPNTTNNRPTNSRPATTPSR. Residues 274–298 show a composition bias toward polar residues; the sequence is QEMQQKMQANTVSASKPASNNTASK. Basic residues predominate over residues 322–331; it reads FNKKRKKTRK. Basic and acidic residues predominate over residues 339-352; the sequence is AAKKEMPQRKERPL. The region spanning 438–607 is the tr-type G domain; that stretch reads SRPPVVTIMG…LLEADVLELK (170 aa). Residues 447-454 are G1; sequence GHVDHGKT. 447–454 contributes to the GTP binding site; it reads GHVDHGKT. Positions 472-476 are G2; it reads GITQH. The interval 493–496 is G3; the sequence is DTPG. GTP is bound by residues 493–497 and 547–550; these read DTPGH and NKID. A G4 region spans residues 547–550; the sequence is NKID. Residues 583 to 585 form a G5 region; the sequence is SAK.

It belongs to the TRAFAC class translation factor GTPase superfamily. Classic translation factor GTPase family. IF-2 subfamily.

It localises to the cytoplasm. One of the essential components for the initiation of protein synthesis. Protects formylmethionyl-tRNA from spontaneous hydrolysis and promotes its binding to the 30S ribosomal subunits. Also involved in the hydrolysis of GTP during the formation of the 70S ribosomal complex. The sequence is that of Translation initiation factor IF-2 from Latilactobacillus sakei subsp. sakei (strain 23K) (Lactobacillus sakei subsp. sakei).